We begin with the raw amino-acid sequence, 617 residues long: RNA polymerase sigma factor RpoD (617 aa).

The segment at 192-222 (NITNDSNENEDENEDENEDEDENSIDPELAN) is disordered. Residues 198 to 216 (NENEDENEDENEDEDENSI) show a composition bias toward acidic residues. The sigma-70 factor domain-2 stretch occupies residues 383–453 (MVEANLRLVI…TRSIADQART (71 aa)). Residues 407-410 (DLIQ) carry the Interaction with polymerase core subunit RpoC motif. The segment at 462–538 (ETINKLNRIS…DTTLELPLDS (77 aa)) is sigma-70 factor domain-3. The segment at 551-604 (VLSGLTAREAKVLRMRFGIDMNTDHTLEEVGKQFDVTRERIRQIEAKALRKLRH) is sigma-70 factor domain-4. The H-T-H motif DNA-binding region spans 577–596 (LEEVGKQFDVTRERIRQIEA).

Belongs to the sigma-70 factor family. RpoD/SigA subfamily. As to quaternary structure, interacts transiently with the RNA polymerase catalytic core.

The protein localises to the cytoplasm. In terms of biological role, sigma factors are initiation factors that promote the attachment of RNA polymerase to specific initiation sites and are then released. This sigma factor is the primary sigma factor during exponential growth. This chain is RNA polymerase sigma factor RpoD, found in Buchnera aphidicola subsp. Schizaphis graminum (strain Sg).